Consider the following 382-residue polypeptide: Queuine tRNA-ribosyltransferase (382 aa).

Aspartate 96 acts as the Proton acceptor in catalysis. Residues 96 to 100, aspartate 151, glutamine 194, and glycine 221 each bind substrate; that span reads DSGGF. Residues 252–258 are RNA binding; it reads GVGAPDS. The Nucleophile role is filled by aspartate 271. Residues 276–280 are RNA binding; important for wobble base 34 recognition; that stretch reads TRIAR. Zn(2+) is bound by residues cysteine 309, cysteine 311, cysteine 314, and histidine 340.

Belongs to the queuine tRNA-ribosyltransferase family. As to quaternary structure, homodimer. Within each dimer, one monomer is responsible for RNA recognition and catalysis, while the other monomer binds to the replacement base PreQ1. Zn(2+) is required as a cofactor.

It carries out the reaction 7-aminomethyl-7-carbaguanine + guanosine(34) in tRNA = 7-aminomethyl-7-carbaguanosine(34) in tRNA + guanine. It participates in tRNA modification; tRNA-queuosine biosynthesis. In terms of biological role, catalyzes the base-exchange of a guanine (G) residue with the queuine precursor 7-aminomethyl-7-deazaguanine (PreQ1) at position 34 (anticodon wobble position) in tRNAs with GU(N) anticodons (tRNA-Asp, -Asn, -His and -Tyr). Catalysis occurs through a double-displacement mechanism. The nucleophile active site attacks the C1' of nucleotide 34 to detach the guanine base from the RNA, forming a covalent enzyme-RNA intermediate. The proton acceptor active site deprotonates the incoming PreQ1, allowing a nucleophilic attack on the C1' of the ribose to form the product. After dissociation, two additional enzymatic reactions on the tRNA convert PreQ1 to queuine (Q), resulting in the hypermodified nucleoside queuosine (7-(((4,5-cis-dihydroxy-2-cyclopenten-1-yl)amino)methyl)-7-deazaguanosine). The sequence is that of Queuine tRNA-ribosyltransferase from Lactococcus lactis subsp. lactis (strain IL1403) (Streptococcus lactis).